The sequence spans 349 residues: Holliday junction branch migration complex subunit RuvB (349 aa).

Residues 1 to 181 are large ATPase domain (RuvB-L); sequence MDDRILTSVN…FGVLCPMEFY (181 aa). ATP is bound by residues Leu-20, Arg-21, Gly-62, Lys-65, Thr-66, Thr-67, 128-130, Arg-171, Tyr-181, and Arg-218; that span reads EDY. Position 66 (Thr-66) interacts with Mg(2+). The small ATPAse domain (RuvB-S) stretch occupies residues 182–252; the sequence is NDEELKEIIV…SAKKALNLLE (71 aa). Residues 255 to 349 are head domain (RuvB-H); sequence DEGFDSIDNK…DQCSFFKKEK (95 aa). 2 residues coordinate DNA: Arg-310 and Arg-315.

The protein belongs to the RuvB family. As to quaternary structure, homohexamer. Forms an RuvA(8)-RuvB(12)-Holliday junction (HJ) complex. HJ DNA is sandwiched between 2 RuvA tetramers; dsDNA enters through RuvA and exits via RuvB. An RuvB hexamer assembles on each DNA strand where it exits the tetramer. Each RuvB hexamer is contacted by two RuvA subunits (via domain III) on 2 adjacent RuvB subunits; this complex drives branch migration. In the full resolvosome a probable DNA-RuvA(4)-RuvB(12)-RuvC(2) complex forms which resolves the HJ.

The protein resides in the cytoplasm. It catalyses the reaction ATP + H2O = ADP + phosphate + H(+). The RuvA-RuvB-RuvC complex processes Holliday junction (HJ) DNA during genetic recombination and DNA repair, while the RuvA-RuvB complex plays an important role in the rescue of blocked DNA replication forks via replication fork reversal (RFR). RuvA specifically binds to HJ cruciform DNA, conferring on it an open structure. The RuvB hexamer acts as an ATP-dependent pump, pulling dsDNA into and through the RuvAB complex. RuvB forms 2 homohexamers on either side of HJ DNA bound by 1 or 2 RuvA tetramers; 4 subunits per hexamer contact DNA at a time. Coordinated motions by a converter formed by DNA-disengaged RuvB subunits stimulates ATP hydrolysis and nucleotide exchange. Immobilization of the converter enables RuvB to convert the ATP-contained energy into a lever motion, pulling 2 nucleotides of DNA out of the RuvA tetramer per ATP hydrolyzed, thus driving DNA branch migration. The RuvB motors rotate together with the DNA substrate, which together with the progressing nucleotide cycle form the mechanistic basis for DNA recombination by continuous HJ branch migration. Branch migration allows RuvC to scan DNA until it finds its consensus sequence, where it cleaves and resolves cruciform DNA. The sequence is that of Holliday junction branch migration complex subunit RuvB from Clostridium acetobutylicum (strain ATCC 824 / DSM 792 / JCM 1419 / IAM 19013 / LMG 5710 / NBRC 13948 / NRRL B-527 / VKM B-1787 / 2291 / W).